The primary structure comprises 282 residues: Probable protein phosphatase 2C 45 (282 aa).

A PPM-type phosphatase domain is found at 27–272 (SYGYASSPGK…DNITCVVVRF (246 aa)). Mn(2+) is bound by residues D63, G64, D224, and D263.

The protein belongs to the PP2C family. Requires Mg(2+) as cofactor. It depends on Mn(2+) as a cofactor.

The catalysed reaction is O-phospho-L-seryl-[protein] + H2O = L-seryl-[protein] + phosphate. It catalyses the reaction O-phospho-L-threonyl-[protein] + H2O = L-threonyl-[protein] + phosphate. The protein is Probable protein phosphatase 2C 45 of Oryza sativa subsp. japonica (Rice).